The chain runs to 309 residues: Aspartate carbamoyltransferase catalytic subunit (309 aa).

2 residues coordinate carbamoyl phosphate: R57 and T58. K86 contributes to the L-aspartate binding site. 3 residues coordinate carbamoyl phosphate: R107, H135, and Q138. L-aspartate-binding residues include R168 and R228. Residues L267 and P268 each coordinate carbamoyl phosphate.

It belongs to the aspartate/ornithine carbamoyltransferase superfamily. ATCase family. In terms of assembly, heterooligomer of catalytic and regulatory chains.

It catalyses the reaction carbamoyl phosphate + L-aspartate = N-carbamoyl-L-aspartate + phosphate + H(+). It functions in the pathway pyrimidine metabolism; UMP biosynthesis via de novo pathway; (S)-dihydroorotate from bicarbonate: step 2/3. Catalyzes the condensation of carbamoyl phosphate and aspartate to form carbamoyl aspartate and inorganic phosphate, the committed step in the de novo pyrimidine nucleotide biosynthesis pathway. The sequence is that of Aspartate carbamoyltransferase catalytic subunit from Nitrosopumilus maritimus (strain SCM1).